Consider the following 240-residue polypeptide: Large ribosomal subunit protein bL25 (240 aa).

Residues 1 to 23 form a disordered region; sequence MATVKELKATARPKAGKGAARAE. Residues 10 to 19 show a composition bias toward low complexity; the sequence is TARPKAGKGA.

The protein belongs to the bacterial ribosomal protein bL25 family. CTC subfamily. As to quaternary structure, part of the 50S ribosomal subunit; part of the 5S rRNA/L5/L18/L25 subcomplex. Contacts the 5S rRNA. Binds to the 5S rRNA independently of L5 and L18.

Its function is as follows. This is one of the proteins that binds to the 5S RNA in the ribosome where it forms part of the central protuberance. The chain is Large ribosomal subunit protein bL25 from Afipia carboxidovorans (strain ATCC 49405 / DSM 1227 / KCTC 32145 / OM5) (Oligotropha carboxidovorans).